The primary structure comprises 390 residues: Transforming growth factor beta-1 proprotein (390 aa).

An N-terminal signal peptide occupies residues 1-29 (MPPSGLRLLPLLLPLLWLLVLTPGRPAAG). Positions 30–74 (LSTCKTIDMELVKRKRIEAIRGQILSKLRLASPPSQGEVPPGPLP) are straightjacket domain. Positions 75–271 (EAVLALYNST…ATPLERAQQL (197 aa)) are arm domain. Asn-82, Asn-136, and Asn-176 each carry an N-linked (GlcNAc...) asparagine glycan. The bowtie tail stretch occupies residues 226–252 (DSKDNTLRVGINGFSSSRRGDLATIDG). A Cell attachment site motif is present at residues 244–246 (RGD). 4 cysteine pairs are disulfide-bonded: Cys-285/Cys-294, Cys-293/Cys-356, Cys-322/Cys-387, and Cys-326/Cys-389.

This sequence belongs to the TGF-beta family. In terms of assembly, homodimer; disulfide-linked. Interacts with the serine proteases, HTRA1 and HTRA3: the interaction with either inhibits TGFB1-mediated signaling and the HTRA protease activity is required for this inhibition. May interact with THSD4; this interaction may lead to sequestration by FBN1 microfibril assembly and attenuation of TGFB signaling. Interacts with CD109, DPT and ASPN. Interacts with EFEMP2. Interacts with TSKU; the interaction contributes to regulation of the hair cycle. Interacts with TGFBR3. As to quaternary structure, homodimer; disulfide-linked. Interacts with transforming growth factor beta-1 (TGF-beta-1) chain; interaction is non-covalent and maintains TGF-beta-1 in a latent state; each latency-associated peptide (LAP) monomer interacts with TGF-beta-1 in the other monomer. Interacts with LTBP1; leading to regulation of TGF-beta-1 activation. Interacts with LRRC32/GARP; leading to regulation of TGF-beta-1 activation on the surface of activated regulatory T-cells (Tregs). Interacts with LRRC33/NRROS; leading to regulation of TGF-beta-1 activation in macrophages and microglia. Interacts (via cell attachment site) with integrins ITGAV and ITGB6 (ITGAV:ITGB6), leading to release of the active TGF-beta-1. Latency-associated peptide: Interacts with NREP; the interaction results in a decrease in TGFB1 autoinduction. Interacts with HSP90AB1; inhibits latent TGFB1 activation. Homodimer; disulfide-linked. Interacts with TGF-beta receptors (TGFBR1 and TGFBR2), leading to signal transduction. Post-translationally, transforming growth factor beta-1 proprotein: The precursor proprotein is cleaved in the Golgi apparatus by FURIN to form Transforming growth factor beta-1 (TGF-beta-1) and Latency-associated peptide (LAP) chains, which remain non-covalently linked, rendering TGF-beta-1 inactive. N-glycosylated. Deglycosylation leads to activation of Transforming growth factor beta-1 (TGF-beta-1); mechanisms triggering deglycosylation-driven activation of TGF-beta-1 are however unclear.

It is found in the secreted. The protein resides in the extracellular space. Its subcellular location is the extracellular matrix. In terms of biological role, transforming growth factor beta-1 proprotein: Precursor of the Latency-associated peptide (LAP) and Transforming growth factor beta-1 (TGF-beta-1) chains, which constitute the regulatory and active subunit of TGF-beta-1, respectively. Required to maintain the Transforming growth factor beta-1 (TGF-beta-1) chain in a latent state during storage in extracellular matrix. Associates non-covalently with TGF-beta-1 and regulates its activation via interaction with 'milieu molecules', such as LTBP1, LRRC32/GARP and LRRC33/NRROS, that control activation of TGF-beta-1. Interaction with LRRC33/NRROS regulates activation of TGF-beta-1 in macrophages and microglia. Interaction with LRRC32/GARP controls activation of TGF-beta-1 on the surface of activated regulatory T-cells (Tregs). Interaction with integrins (ITGAV:ITGB6 or ITGAV:ITGB8) results in distortion of the Latency-associated peptide chain and subsequent release of the active TGF-beta-1. Functionally, multifunctional protein that regulates the growth and differentiation of various cell types and is involved in various processes, such as normal development, immune function, microglia function and responses to neurodegeneration. Activation into mature form follows different steps: following cleavage of the proprotein in the Golgi apparatus, Latency-associated peptide (LAP) and Transforming growth factor beta-1 (TGF-beta-1) chains remain non-covalently linked rendering TGF-beta-1 inactive during storage in extracellular matrix. At the same time, LAP chain interacts with 'milieu molecules', such as LTBP1, LRRC32/GARP and LRRC33/NRROS that control activation of TGF-beta-1 and maintain it in a latent state during storage in extracellular milieus. TGF-beta-1 is released from LAP by integrins (ITGAV:ITGB6 or ITGAV:ITGB8): integrin-binding to LAP stabilizes an alternative conformation of the LAP bowtie tail and results in distortion of the LAP chain and subsequent release of the active TGF-beta-1. Once activated following release of LAP, TGF-beta-1 acts by binding to TGF-beta receptors (TGFBR1 and TGFBR2), which transduce signal. While expressed by many cells types, TGF-beta-1 only has a very localized range of action within cell environment thanks to fine regulation of its activation by Latency-associated peptide chain (LAP) and 'milieu molecules'. Plays an important role in bone remodeling: acts as a potent stimulator of osteoblastic bone formation, causing chemotaxis, proliferation and differentiation in committed osteoblasts. Can promote either T-helper 17 cells (Th17) or regulatory T-cells (Treg) lineage differentiation in a concentration-dependent manner. At high concentrations, leads to FOXP3-mediated suppression of RORC and down-regulation of IL-17 expression, favoring Treg cell development. At low concentrations in concert with IL-6 and IL-21, leads to expression of the IL-17 and IL-23 receptors, favoring differentiation to Th17 cells. Stimulates sustained production of collagen through the activation of CREB3L1 by regulated intramembrane proteolysis (RIP). Mediates SMAD2/3 activation by inducing its phosphorylation and subsequent translocation to the nucleus. Positively regulates odontoblastic differentiation in dental papilla cells, via promotion of IPO7-mediated translocation of phosphorylated SMAD2 to the nucleus and subsequent transcription of target genes. Can induce epithelial-to-mesenchymal transition (EMT) and cell migration in various cell types. This chain is Transforming growth factor beta-1 proprotein (TGFB1), found in Equus caballus (Horse).